We begin with the raw amino-acid sequence, 1306 residues long: Angiotensin-converting enzyme (1306 aa).

The signal sequence occupies residues 1–28 (MGAASGRRSPPLLLPLLLLLLPPPPVIL). Residues 29-1256 (ELDPALQPGN…GLNLEEQQAR (1228 aa)) are Extracellular-facing. Peptidase M2 domains are found at residues 40 to 624 (PADE…LGWP) and 643 to 1222 (VSDE…LGWP). N-linked (GlcNAc...) asparagine glycans are attached at residues Asn54, Asn74, Asn111, Asn146, and Asn160. The cysteines at positions 157 and 165 are disulfide-linked. Chloride is bound at residue Tyr231. N-linked (GlcNAc...) asparagine glycosylation is present at Asn318. The cysteines at positions 359 and 377 are disulfide-linked. His390 contacts Zn(2+). Glu391 (proton acceptor 1) is an active-site residue. The Zn(2+) site is built by His394 and Glu418. Asn445 and Asn509 each carry an N-linked (GlcNAc...) asparagine glycan. The active-site Proton donor 1 is His520. N-linked (GlcNAc...) asparagine glycosylation is present at Asn523. Arg529 is a binding site for chloride. Cys545 and Cys557 form a disulfide bridge. N-linked (GlcNAc...) asparagine glycans are attached at residues Asn673, Asn695, Asn714, and Asn760. Cys757 and Cys763 form a disulfide bridge. Positions 791 and 829 each coordinate chloride. A glycan (N-linked (GlcNAc...) asparagine) is linked at Asn942. The cysteines at positions 957 and 975 are disulfide-linked. His988 contributes to the Zn(2+) binding site. The Proton acceptor 2 role is filled by Glu989. The Zn(2+) site is built by His992 and Glu1016. The chloride site is built by Trp1090 and Arg1094. His1118 serves as the catalytic Proton donor 2. Arg1127 contributes to the chloride binding site. Residues Cys1143 and Cys1155 are joined by a disulfide bond. N-linked (GlcNAc...) asparagine glycans are attached at residues Asn1191 and Asn1225. A juxtamembrane stalk region spans residues 1215-1256 (HGEKLGWPQYNWTPNSARLEGPFVGSGRVNFLGLNLEEQQAR). Residues 1257–1277 (VGQWVLLFLGVALLVATLGLT) form a helical membrane-spanning segment. The Cytoplasmic segment spans residues 1278 to 1306 (QRLFSIRHHSLRRPHRGPQFGSEVELRHS). Ser1299 is subject to Phosphoserine.

Belongs to the peptidase M2 family. Monomer and homodimer; homodimerizes following binding to an inhibitor. Interacts with calmodulin (CALM1, CALM2 or CALM3); interaction takes place in the cytoplasmic region and regulates phosphorylation and proteolytic cleavage. The cofactor is Zn(2+). Chloride is required as a cofactor. Produced following proteolytic cleavage by secretase enzymes that cleave the transmembrane form in the juxtamembrane stalk region upstream of the transmembrane region. Cleavage can take place at different sites of the juxtamembrane stalk region. Post-translationally, phosphorylated by CK2 on Ser-1299; which allows membrane retention. Phosphorylated on tyrosine residues on its extracellular part, promoting cleavage by secretase enzymes and formation of the soluble form (Angiotensin-converting enzyme, soluble form).

It localises to the cell membrane. The protein resides in the cytoplasm. It is found in the secreted. The catalysed reaction is Release of a C-terminal dipeptide, oligopeptide-|-Xaa-Yaa, when Xaa is not Pro, and Yaa is neither Asp nor Glu. Thus, conversion of angiotensin I to angiotensin II, with increase in vasoconstrictor activity, but no action on angiotensin II.. The enzyme catalyses angiotensin I + H2O = L-histidyl-L-leucine + angiotensin II. It catalyses the reaction bradykinin + H2O = L-Phe-L-Arg + bradykinin(1-7). It carries out the reaction substance P + H2O = substance P(1-9) + L-Leu-L-Met-NH2. The catalysed reaction is substance P + H2O = substance P(1-8) + Gly-L-Leu-L-Met-NH2. The enzyme catalyses substance P + H2O = L-Phe-L-Phe-Gly-L-Leu-L-Met-NH2 + substance P(1-6). It catalyses the reaction neurotensin + H2O = neurotensin(1-11) + L-isoleucyl-L-leucine. It carries out the reaction goralatide + H2O = N-acetyl-L-seryl-L-aspartate + L-lysyl-L-proline. The catalysed reaction is Met-enkephalin + H2O = L-phenylalanyl-L-methionine + L-tyrosylglycylglycine. The enzyme catalyses Leu-enkephalin + H2O = L-tyrosylglycylglycine + L-phenylalanyl-L-leucine. It catalyses the reaction Met-enkephalin-Arg-Phe + H2O = L-arginyl-L-phenylalanine + Met-enkephalin. Its activity is regulated as follows. The dipeptidyl carboxypeptidase activity is strongly activated by chloride. The dipeptidyl carboxypeptidase activity is specifically inhibited by lisinopril, captopril and enalaprilat. Its function is as follows. Dipeptidyl carboxypeptidase that removes dipeptides from the C-terminus of a variety of circulating hormones, such as angiotensin I, bradykinin or enkephalins, thereby playing a key role in the regulation of blood pressure, electrolyte homeostasis or synaptic plasticity. Composed of two similar catalytic domains, each possessing a functional active site, with different selectivity for substrates. Plays a major role in the angiotensin-renin system that regulates blood pressure and sodium retention by the kidney by converting angiotensin I to angiotensin II, resulting in an increase of the vasoconstrictor activity of angiotensin. Also able to inactivate bradykinin, a potent vasodilator, and therefore enhance the blood pressure response. Acts as a regulator of synaptic transmission by mediating cleavage of neuropeptide hormones, such as substance P, neurotensin or enkephalins. Catalyzes degradation of different enkephalin neuropeptides (Met-enkephalin, Leu-enkephalin, Met-enkephalin-Arg-Phe and possibly Met-enkephalin-Arg-Gly-Leu). Acts as a regulator of synaptic plasticity in the nucleus accumbens of the brain by mediating cleavage of Met-enkephalin-Arg-Phe, a strong ligand of Mu-type opioid receptor OPRM1, into Met-enkephalin. Met-enkephalin-Arg-Phe cleavage by ACE decreases activation of OPRM1, leading to long-term synaptic potentiation of glutamate release. Also acts as a regulator of hematopoietic stem cell differentiation by mediating degradation of hemoregulatory peptide N-acetyl-SDKP (AcSDKP). Acts as a regulator of cannabinoid signaling pathway by mediating degradation of hemopressin, an antagonist peptide of the cannabinoid receptor CNR1. Involved in amyloid-beta metabolism by catalyzing degradation of Amyloid-beta protein 40 and Amyloid-beta protein 42 peptides, thereby preventing plaque formation. Catalyzes cleavage of cholecystokinin (maturation of Cholecystokinin-8 and Cholecystokinin-5) and Gonadoliberin-1 (both maturation and degradation) hormones. Degradation of hemoregulatory peptide N-acetyl-SDKP (AcSDKP) and amyloid-beta proteins is mediated by the N-terminal catalytic domain, while angiotensin I and cholecystokinin cleavage is mediated by the C-terminal catalytic region. Soluble form that is released in blood plasma and other body fluids following proteolytic cleavage in the juxtamembrane stalk region. The sequence is that of Angiotensin-converting enzyme from Bos taurus (Bovine).